We begin with the raw amino-acid sequence, 27 residues long: Trichocyst matrix protein T4-C (27 aa).

This sequence belongs to the TMP family.

It localises to the trichocyst. Structural protein that crystallize inside the trichocyst matrix. This chain is Trichocyst matrix protein T4-C (T4C), found in Paramecium tetraurelia.